The primary structure comprises 151 residues: NADH-quinone oxidoreductase subunit I 2 (151 aa).

2 4Fe-4S ferredoxin-type domains span residues 49-82 (PRLN…VTSE) and 93-122 (VTFT…LTQD). [4Fe-4S] cluster contacts are provided by C62, C65, C68, C72, C102, C105, C108, and C112.

It belongs to the complex I 23 kDa subunit family. In terms of assembly, NDH-1 is composed of 14 different subunits. Subunits NuoA, H, J, K, L, M, N constitute the membrane sector of the complex. [4Fe-4S] cluster serves as cofactor.

It is found in the cell inner membrane. It carries out the reaction a quinone + NADH + 5 H(+)(in) = a quinol + NAD(+) + 4 H(+)(out). NDH-1 shuttles electrons from NADH, via FMN and iron-sulfur (Fe-S) centers, to quinones in the respiratory chain. The immediate electron acceptor for the enzyme in this species is believed to be ubiquinone. Couples the redox reaction to proton translocation (for every two electrons transferred, four hydrogen ions are translocated across the cytoplasmic membrane), and thus conserves the redox energy in a proton gradient. The protein is NADH-quinone oxidoreductase subunit I 2 of Solibacter usitatus (strain Ellin6076).